Here is a 479-residue protein sequence, read N- to C-terminus: Glycerol kinase 5 (479 aa).

Positions 20 and 21 each coordinate ATP. R90, D267, and Q268 together coordinate glycerol. Residues T289, G332, and G432 each contribute to the ATP site.

This sequence belongs to the FGGY kinase family.

Its subcellular location is the cytoplasm. The enzyme catalyses glycerol + ATP = sn-glycerol 3-phosphate + ADP + H(+). It functions in the pathway polyol metabolism; glycerol degradation via glycerol kinase pathway; sn-glycerol 3-phosphate from glycerol: step 1/1. Functionally, skin-specific kinase that plays a key role in glycerol metabolism, catalyzing its phosphorylation to produce sn-glycerol 3-phosphate. Involved in skin-specific regulation of sterol regulatory element-binding protein (SREBP) processing and lipid biosynthesis. The protein is Glycerol kinase 5 (gk5) of Xenopus laevis (African clawed frog).